The primary structure comprises 187 residues: Peptidyl-tRNA hydrolase (187 aa).

Y18 is a tRNA binding site. Catalysis depends on H23, which acts as the Proton acceptor. TRNA-binding residues include F65, N67, and N113.

Belongs to the PTH family. Monomer.

The protein resides in the cytoplasm. The catalysed reaction is an N-acyl-L-alpha-aminoacyl-tRNA + H2O = an N-acyl-L-amino acid + a tRNA + H(+). In terms of biological role, hydrolyzes ribosome-free peptidyl-tRNAs (with 1 or more amino acids incorporated), which drop off the ribosome during protein synthesis, or as a result of ribosome stalling. Functionally, catalyzes the release of premature peptidyl moieties from peptidyl-tRNA molecules trapped in stalled 50S ribosomal subunits, and thus maintains levels of free tRNAs and 50S ribosomes. The polypeptide is Peptidyl-tRNA hydrolase (Coxiella burnetii (strain CbuK_Q154) (Coxiella burnetii (strain Q154))).